A 501-amino-acid polypeptide reads, in one-letter code: Aerobic glycerol-3-phosphate dehydrogenase (501 aa).

Asp-5 to Glu-33 provides a ligand contact to FAD.

It belongs to the FAD-dependent glycerol-3-phosphate dehydrogenase family. Requires FAD as cofactor.

Its subcellular location is the cytoplasm. It catalyses the reaction a quinone + sn-glycerol 3-phosphate = dihydroxyacetone phosphate + a quinol. It participates in polyol metabolism; glycerol degradation via glycerol kinase pathway; glycerone phosphate from sn-glycerol 3-phosphate (aerobic route): step 1/1. Its function is as follows. Conversion of glycerol 3-phosphate to dihydroxyacetone. Uses molecular oxygen or nitrate as electron acceptor. This Escherichia coli (strain K12) protein is Aerobic glycerol-3-phosphate dehydrogenase (glpD).